We begin with the raw amino-acid sequence, 705 residues long: Cell cycle serine/threonine-protein kinase CDC5/MSD2 (705 aa).

Position 23 is a phosphothreonine (T23). A compositionally biased stretch (basic and acidic residues) spans 41-53 (QTKRLDPNNDHHH). Residues 41–63 (QTKRLDPNNDHHHQPAQKKKREK) are disordered. In terms of domain architecture, Protein kinase spans 82–337 (YHRGHFLGEG…LTEIMDYVWF (256 aa)). Residues 88–96 (LGEGGFARC) and K110 each bind ATP. D204 acts as the Proton acceptor in catalysis. Position 419 is a phosphoserine (S419). Residues 513-595 (IVTKWVDYSN…VDFFAKYMKA (83 aa)) enclose the POLO box 1 domain. Residues E553, H569, H609, and D612 each coordinate Zn(2+). Residues 614–700 (FLRRYTRYKP…IKEGLKQKST (87 aa)) form the POLO box 2 domain.

The protein belongs to the protein kinase superfamily. Ser/Thr protein kinase family. CDC5/Polo subfamily. As to quaternary structure, interacts with CDC48; the interaction is likely to result in CDC5 degradation. Interacts with CSA1.

It localises to the cytoplasm. The protein localises to the cytoskeleton. The protein resides in the microtubule organizing center. Its subcellular location is the spindle pole body. It carries out the reaction L-seryl-[protein] + ATP = O-phospho-L-seryl-[protein] + ADP + H(+). It catalyses the reaction L-threonyl-[protein] + ATP = O-phospho-L-threonyl-[protein] + ADP + H(+). In terms of biological role, protein kinase required for the cell cycle where it is involved in mitotic exit. A component of the fear (CDC14 early anaphase release) network which promotes CDC14 release from the nucleolus during early anaphase. Phosphorylates SCC1/MCD1 and NET1. This chain is Cell cycle serine/threonine-protein kinase CDC5/MSD2 (CDC5), found in Saccharomyces cerevisiae (strain ATCC 204508 / S288c) (Baker's yeast).